The following is an 871-amino-acid chain: DNA mismatch repair protein MutS (871 aa).

ATP is bound at residue 621-628 (GPNMAGKS).

The protein belongs to the DNA mismatch repair MutS family.

Functionally, this protein is involved in the repair of mismatches in DNA. It is possible that it carries out the mismatch recognition step. This protein has a weak ATPase activity. This chain is DNA mismatch repair protein MutS, found in Geobacter sulfurreducens (strain ATCC 51573 / DSM 12127 / PCA).